A 288-amino-acid chain; its full sequence is Disulfide-bond oxidoreductase YghU (288 aa).

Glutathione is bound by residues N26, 52-54, Q87, I101, 117-118, Q151, and R178; these read TPN and ES. The region spanning 46–133 is the GST N-terminal domain; that stretch reads QLYSLGTPNG…YLAEKFGYFL (88 aa). Residues 139–265 enclose the GST C-terminal domain; the sequence is KRTETMNWLF…RIVNRTNGPL (127 aa). The interval 260-288 is disordered; it reads RTNGPLNEQLHERHDASDFETNTEDKRQG. Residues 268 to 288 are compositionally biased toward basic and acidic residues; it reads QLHERHDASDFETNTEDKRQG.

Belongs to the GST superfamily. Nu-class GSH transferase family. Homodimer.

Its function is as follows. Exhibits a robust glutathione (GSH)-dependent disulfide-bond reductase activity toward the model substrate, 2-hydroxyethyl disulfide; the actual physiological substrates are not known. Also displays a modest GSH-dependent peroxidase activity toward several organic hydroperoxides, such as cumene hydroperoxide and linoleic acid 13(S)-hydroperoxide, but does not reduce H(2)O(2) or tert-butyl hydroperoxide at appreciable rates. Exhibits little or no GSH transferase activity with most typical electrophilic substrates, and has no detectable transferase activity toward 1-chloro-2,4-dinitrobenzene (CDNB) with glutathionylspermidine (GspSH) as the nucleophilic substrate. The sequence is that of Disulfide-bond oxidoreductase YghU (yghU) from Escherichia coli (strain K12).